We begin with the raw amino-acid sequence, 388 residues long: MREYAVFTSESVSEGHPDKMADQISDAILDAILKEDPYARVACETLVKTGAVVLAGEITTTANIDVEAVVRQTVNGIGYHHSDLGFDGSTCAVINMIGKQSPEIAQGVDRQKPEDQGAGDQGLMFGYASRETDVLMPAPISYAHRLMERQAELRRSGALPWLRPDAKSQVTFAYENGKPVRLDAVVLSTQHDPEITQTQLKEAVIEEIIKPIIPAEMFHAATKFHINPTGMFVIGGPVGDCGLTGRKIIVDTYGGMARHGGGAFSGKDPSKVDRSAAYAGRYVAKNIVAAGLADKCEIQVSYAIGVAEPTSISINTFGTAKVSDELIIQLVREHFDLRPFGITRMLNLIQPMYKQTAAYGHFGREGSNTAFTWEKTDKVEALKDAAGL.

His16 provides a ligand contact to ATP. Asp18 is a Mg(2+) binding site. Glu44 serves as a coordination point for K(+). Glu57 and Gln100 together coordinate L-methionine. Residues 100 to 110 are flexible loop; sequence QSPEIAQGVDR. Residues 165-167, Asp240, 246-247, Ala263, and Lys267 each bind ATP; these read DAK and RK. Asp240 serves as a coordination point for L-methionine. An L-methionine-binding site is contributed by Lys271.

It belongs to the AdoMet synthase family. As to quaternary structure, homotetramer; dimer of dimers. The cofactor is Mg(2+). K(+) serves as cofactor.

The protein localises to the cytoplasm. It carries out the reaction L-methionine + ATP + H2O = S-adenosyl-L-methionine + phosphate + diphosphate. It functions in the pathway amino-acid biosynthesis; S-adenosyl-L-methionine biosynthesis; S-adenosyl-L-methionine from L-methionine: step 1/1. In terms of biological role, catalyzes the formation of S-adenosylmethionine (AdoMet) from methionine and ATP. The overall synthetic reaction is composed of two sequential steps, AdoMet formation and the subsequent tripolyphosphate hydrolysis which occurs prior to release of AdoMet from the enzyme. This Acinetobacter baumannii (strain AYE) protein is S-adenosylmethionine synthase.